The sequence spans 262 residues: MATYAVLGSTGNTGKCLVELALQQPNAKVHAYCRNKTKLTNQLPIIIDNKRVEVFEGSIYDVDLFVDCLRGCRAVFLTITTNDNVPGCHMSQDSVRTIIAALVKLKKQQGPSGTIPKILLLSSATIDEHLNRDMPGWFKPIMKAAASNVYDDLKVAEQMLRAEDDWLTTIYIKPGGLSLDVQRGHKLSLDKQESFISYYDLAAAMIEAADDVEGRYDMKNVGVVNANGGARFPPGTPMCIAVGLLRHFFPWLHNYLPSTGPA.

The protein belongs to the avfA family.

Its pathway is secondary metabolite biosynthesis. In terms of biological role, oxidoreductase; part of the gene cluster that mediates the biosynthesis of dibenzodioxocinones such as pestalotiollide B, a novel class of inhibitors against cholesterol ester transfer protein (CEPT). The biosynthesis initiates from condensation of acetate and malonate units catalyzed by the non-reducing PKS pks8/GME11356. Pks8/GME11356 lacks a thioesterase (TE) domain, which is important to the cyclizing of the third ring of atrochrysone carboxylic acid, and the esterase GME11355 might play the role of TE and catalyzes the cyclization reaction of the C ring. The lactamase-like protein GME11357 (or other beta-lactamases in Pestalotiopsis microspora) probably hydrolyzes the thioester bond between the ACP of pks8/GME11356 and the intermediate to release atrochrysone carboxylic acid, which is spontaneously dehydrates to form endocrocin anthrone. Endocrocin anthrone is further converted to emodin via the endocrocin intermediate. Emodin is then oxidized by several enzymes such as the Baeyer-Villiger oxidase GME11358, the oxidoreductase GME11367, the short chain dehydrogenase/reductase GME11373, as well as by other oxidoreductases from the cluster, to modify the A and C rings and open the B ring, and finally yield monodictyphenone. The prenyltransferase GME11375 may catalyze the addition reaction between the C5 side chains and the carbon bone of dibenzodioxocinones. The remaining biochemical reactions to the final product dibenzodioxocinones should be methylation catalyzed by methyltransferase GME11366 and reduction and lactonization reaction catalyzed by a series of oxidordeuctases. The protein is Oxidoreductase GME11367 of Pestalotiopsis microspora.